We begin with the raw amino-acid sequence, 374 residues long: Alcohol dehydrogenase class-3 (374 aa).

Alanine 2 is modified (N-acetylalanine). Positions 45, 67, 97, 100, 103, 111, and 174 each coordinate Zn(2+). Lysine 233 carries the post-translational modification N6-succinyllysine. Serine 247 carries the phosphoserine modification. An N6-succinyllysine modification is found at lysine 315. Serine 324 carries the phosphoserine modification.

This sequence belongs to the zinc-containing alcohol dehydrogenase family. Class-III subfamily. As to quaternary structure, homodimer. Zn(2+) serves as cofactor.

It localises to the cytoplasm. The catalysed reaction is a primary alcohol + NAD(+) = an aldehyde + NADH + H(+). The enzyme catalyses a secondary alcohol + NAD(+) = a ketone + NADH + H(+). It carries out the reaction S-(hydroxymethyl)glutathione + NADP(+) = S-formylglutathione + NADPH + H(+). It catalyses the reaction S-(hydroxymethyl)glutathione + NAD(+) = S-formylglutathione + NADH + H(+). The catalysed reaction is 20-oxo-(5Z,8Z,11Z,14Z)-eicosatetraenoate + NAD(+) + H2O = (5Z,8Z,11Z,14Z)-eicosatetraenedioate + NADH + 2 H(+). The enzyme catalyses 20-hydroxy-(5Z,8Z,11Z,14Z)-eicosatetraenoate + NAD(+) = 20-oxo-(5Z,8Z,11Z,14Z)-eicosatetraenoate + NADH + H(+). It carries out the reaction S-nitrosoglutathione + NADH + H(+) = S-(hydroxysulfenamide)glutathione + NAD(+). In terms of biological role, catalyzes the oxidation of long-chain primary alcohols and the oxidation of S-(hydroxymethyl) glutathione. Also oxidizes long chain omega-hydroxy fatty acids, such as 20-HETE, producing both the intermediate aldehyde, 20-oxoarachidonate and the end product, a dicarboxylic acid, (5Z,8Z,11Z,14Z)-eicosatetraenedioate. Class-III ADH is remarkably ineffective in oxidizing ethanol. Required for clearance of cellular formaldehyde, a cytotoxic and carcinogenic metabolite that induces DNA damage. Also acts as a S-nitroso-glutathione reductase by catalyzing the NADH-dependent reduction of S-nitrosoglutathione, thereby regulating protein S-nitrosylation. This is Alcohol dehydrogenase class-3 from Bos taurus (Bovine).